The sequence spans 308 residues: Glutaminase (308 aa).

Substrate contacts are provided by S66, N117, E161, N168, Y192, Y244, and V262.

The protein belongs to the glutaminase family. As to quaternary structure, homotetramer.

It catalyses the reaction L-glutamine + H2O = L-glutamate + NH4(+). The polypeptide is Glutaminase (Photorhabdus laumondii subsp. laumondii (strain DSM 15139 / CIP 105565 / TT01) (Photorhabdus luminescens subsp. laumondii)).